The primary structure comprises 240 residues: MPVSKCPKKSESLWKGWDRKAQKNGLRRQVYAVNGDYYVGEWKDNVKHGKGTQVWKKNGAIYEGDWKFGKRDGYGTLSLPDQQTGKCRRVYSGWWKGDKKSGYGIQFFGPKEYYEGEWCGSQRSGWGRMYYSNGDIYEGQWENDKPNGDGMLRLKNGNRYEGCWERGMKNGLGRFFHLDHGQLFEGFWVDNMAKCGTMIDFGRDEAPEPTQFPIPEVKILDPDGVLAQALAMFKKTEEGD.

The tract at residues 6–35 (CPKKSESLWKGWDRKAQKNGLRRQVYAVNG) is interaction with MDM2. MORN repeat units follow at residues 38 to 60 (YVGE…KNGA), 62 to 84 (YEGD…DQQT), 91 to 113 (YSGW…PKEY), 114 to 136 (YEGE…NGDI), 137 to 159 (YEGQ…NGNR), 160 to 182 (YEGC…DHGQ), and 184 to 205 (FEGF…GRDE). The interval 76 to 100 (TLSLPDQQTGKCRRVYSGWWKGDKK) is interaction with SIRT1. The segment at 206 to 240 (APEPTQFPIPEVKILDPDGVLAQALAMFKKTEEGD) is interaction with TP53.

Interacts with MEIG1. Interacts with TP53, MDM2 and SIRT1; the interactions mediate post-transcriptional modifications of TP53 by MDM2 and SIRT1.

It localises to the cytoplasmic vesicle. It is found in the secretory vesicle. The protein localises to the acrosome. Its function is as follows. Assembles a suppression complex (suppresome) by tethering SIRT1 and MDM2 to regulate composite modifications of p53/TP53. Confers both deacetylation-mediated functional inactivation, by SIRT1, and ubiquitination-dependent degradation, by MDM2, of p53/TP53, promoting a proliferative and cell survival behaviors. May play a role in the regulation of spermatogenesis. The chain is MORN repeat-containing protein 3 (MORN3) from Macaca fascicularis (Crab-eating macaque).